A 419-amino-acid polypeptide reads, in one-letter code: Putative nickel insertion protein (419 aa).

A disordered region spans residues 69 to 90 (HDPSNHPSQNTHHHHHHHTRHL). The segment covering 79–88 (THHHHHHHTR) has biased composition (basic residues).

It belongs to the LarC family.

This is Putative nickel insertion protein from Rippkaea orientalis (strain PCC 8801 / RF-1) (Cyanothece sp. (strain PCC 8801)).